A 414-amino-acid chain; its full sequence is Probable isoprenylcysteine alpha-carbonyl methylesterase ICME (414 aa).

Residues 1 to 54 (MQPASPVSGDAGPVAEAVPPRGAPQVLVRRRSVPFSPDSPLAPGSRGGGERRST) are disordered. A run of 2 helical transmembrane segments spans residues 90–110 (LAAL…VGYY) and 145–165 (VVAF…GALL). Substrate-binding positions include 151-153 (GGA) and 222-224 (QSA). Active-site residues include Ser-223, Asp-323, and His-355.

Belongs to the AB hydrolase superfamily. Isoprenylcysteine methylesterase family.

Its subcellular location is the endoplasmic reticulum membrane. The protein resides in the golgi apparatus membrane. The catalysed reaction is [protein]-C-terminal S-[(2E,6E)-farnesyl]-L-cysteine methyl ester + H2O = [protein]-C-terminal S-[(2E,6E)-farnesyl]-L-cysteine + methanol + H(+). Functionally, catalyzes the demethylation of isoprenylcysteine methylesters. The sequence is that of Probable isoprenylcysteine alpha-carbonyl methylesterase ICME (IMCE) from Oryza sativa subsp. japonica (Rice).